A 392-amino-acid polypeptide reads, in one-letter code: PMA1 stabilization in the Golgi protein 1 (392 aa).

A signal peptide spans 1-22 (MRFHDSILIFFSLASLYQHVHG). Residues threonine 34 and threonine 35 are each glycosylated (O-linked (Man) threonine). Serine 36 is a glycosylation site (O-linked (Man) serine). Threonine 45 carries an O-linked (Man) threonine glycan. O-linked (Man) serine glycosylation occurs at serine 49. 3 O-linked (Man) threonine glycosylation sites follow: threonine 55, threonine 57, and threonine 63. Serine 65 carries O-linked (Man) serine glycosylation. O-linked (Man) threonine glycosylation is present at threonine 71. O-linked (Man) serine glycosylation is present at serine 80. O-linked (Man) threonine glycans are attached at residues threonine 89 and threonine 99. An O-linked (Man) serine glycan is attached at serine 107. O-linked (Man) threonine glycosylation is found at threonine 108 and threonine 112. O-linked (Man) serine glycans are attached at residues serine 114 and serine 115. The O-linked (Man) threonine glycan is linked to threonine 117. 2 O-linked (Man) serine glycosylation sites follow: serine 119 and serine 148. O-linked (Man) threonine glycosylation is present at threonine 156. O-linked (Man) serine glycosylation occurs at serine 171. O-linked (Man) threonine glycosylation occurs at threonine 176. O-linked (Man) serine glycosylation is present at serine 181. O-linked (Man) threonine glycans are attached at residues threonine 188, threonine 192, threonine 195, and threonine 199. O-linked (Man) serine glycosylation is found at serine 203 and serine 215. Residues 230–317 (DIPATFFSSE…DAGITNDQWY (88 aa)) are Lumenal-facing. The chain crosses the membrane as a helical span at residues 318 to 338 (YVALSIPTVVVVFFVFMYFFL). At 339–392 (YVNGKNRDFTDVTRKALNKKRRVLGKFSEMKKFKNMKNHKYTELPSYKKTSKQN) the chain is on the cytoplasmic side.

In terms of assembly, interacts with EXP1. PSG1-N' interacts with ERAD-related proteins involved in PMA1 quality control including EPS1, CDC48, UBX2 and SSM4. PSG1-C' interacts with the TLG1/2 SNARE complex proteins TLG1, TLG2 and VTI1. The precursor protein is cleaved into two polypeptide chains, PSG1-N' and PSG1-C'. The cleavage is performed in the Golgi apparatus by Ca(+)-dependent serine protease KEX2 between Arg-229 and Asp-230. Post-translationally, PSG1-N' is highly O-mannosylated.

The protein resides in the golgi apparatus lumen. It is found in the cytoplasmic vesicle. It localises to the COPI-coated vesicle membrane. In terms of biological role, with EXP1, the specific cargo receptor protein for the plasma membrane ATPase PMA1, is involved in the transport and/or maturation of PMA1. EXP1 and PSG1 probably act sequentially to promote PMA1 sorting between the ER and the Golgi, with EXP1 promoting PMA1 export from the ER to the Golgi while PSG1 has a role in PMA1 maturation or quality control in the Golgi. PSG1 might also couple PMA1 sorting and maturation in the early secretory pathway with the glycosylation machinery. Its function is as follows. PSG1 is cleaved by KEX2 in two stable peptides, PSG1-N' and PSG1-C', the former supporting a role in maturation quality control, the latter having a role in modulating vesicular trafficking. This is PMA1 stabilization in the Golgi protein 1 from Saccharomyces cerevisiae (strain ATCC 204508 / S288c) (Baker's yeast).